Here is a 294-residue protein sequence, read N- to C-terminus: Bifunctional protein FolD 1 (294 aa).

NADP(+)-binding positions include 165-167, Ser-190, and Thr-231; that span reads GRS.

This sequence belongs to the tetrahydrofolate dehydrogenase/cyclohydrolase family. In terms of assembly, homodimer.

The catalysed reaction is (6R)-5,10-methylene-5,6,7,8-tetrahydrofolate + NADP(+) = (6R)-5,10-methenyltetrahydrofolate + NADPH. It carries out the reaction (6R)-5,10-methenyltetrahydrofolate + H2O = (6R)-10-formyltetrahydrofolate + H(+). The protein operates within one-carbon metabolism; tetrahydrofolate interconversion. In terms of biological role, catalyzes the oxidation of 5,10-methylenetetrahydrofolate to 5,10-methenyltetrahydrofolate and then the hydrolysis of 5,10-methenyltetrahydrofolate to 10-formyltetrahydrofolate. This Paenarthrobacter aurescens (strain TC1) protein is Bifunctional protein FolD 1.